The sequence spans 342 residues: MCSTMSAPTCLAHLPPCFLLLALVLVPSDASGQSSRNDWQVLQPEGPMLVAEGETLLLRCMVVGSCTDGMIKWVKVSTQDQQEIYNFKRGSFPGVMPMIQRTSEPLNCDYSIYIHNVTREHTGTYHCVRFDGLSEHSEMKSDEGTSVLVKGAGDPEPDLWIIQPQELVLGTTGDTVFLNCTVLGDGPPGPIRWFQGAGLSREAIYNFGGISHPKETAVQASNNDFSILLQNVSSEDAGTYYCVKFQRKPNRQYLSGQGTSLKVKAKSTSSKEAEFTSEPATEMSPTGLLVVFAPVVLGLKAITLAALLLALATSRRSPGQEDVKTTGPAGAMNTLAWSKGQE.

An N-terminal signal peptide occupies residues 1-32 (MCSTMSAPTCLAHLPPCFLLLALVLVPSDASG). 2 Ig-like V-type domains span residues 33–143 (QSSR…KSDE) and 157–258 (PDLW…SGQG). The Extracellular portion of the chain corresponds to 33-287 (QSSRNDWQVL…EPATEMSPTG (255 aa)). The cysteines at positions 60 and 127 are disulfide-linked. 3 N-linked (GlcNAc...) asparagine glycosylation sites follow: N116, N179, and N231. Residues C180 and C242 are joined by a disulfide bond. A helical membrane pass occupies residues 288–308 (LLVVFAPVVLGLKAITLAALL). Over 309-342 (LALATSRRSPGQEDVKTTGPAGAMNTLAWSKGQE) the chain is Cytoplasmic. A disordered region spans residues 317–342 (SPGQEDVKTTGPAGAMNTLAWSKGQE).

Its subcellular location is the membrane. This Homo sapiens (Human) protein is Signal-regulatory protein beta-2 (SIRPB2).